Consider the following 511-residue polypeptide: Cytochrome P450 4B1 (511 aa).

Glu-315 contributes to the heme binding site. Ser-436 bears the Phosphoserine mark. Cys-453 lines the heme pocket.

Belongs to the cytochrome P450 family. Requires heme as cofactor. In terms of tissue distribution, detected in the liver and lung (at protein level).

Its subcellular location is the endoplasmic reticulum membrane. The protein resides in the microsome membrane. The catalysed reaction is an organic molecule + reduced [NADPH--hemoprotein reductase] + O2 = an alcohol + oxidized [NADPH--hemoprotein reductase] + H2O + H(+). Its function is as follows. Cytochromes P450 are a group of heme-thiolate monooxygenases. In liver microsomes, this enzyme is involved in an NADPH-dependent electron transport pathway. It oxidizes a variety of structurally unrelated compounds, including steroids, fatty acids, and xenobiotics. The protein is Cytochrome P450 4B1 (CYP4B1) of Homo sapiens (Human).